The following is a 413-amino-acid chain: CinA-like protein (413 aa).

This sequence belongs to the CinA family.

This is CinA-like protein from Geobacter sulfurreducens (strain ATCC 51573 / DSM 12127 / PCA).